The following is a 914-amino-acid chain: Protein translocase subunit SecA (914 aa).

Residues Gln-87, 105–109, and Asp-508 each bind ATP; that span reads GEGKT. Residues Cys-898, Cys-900, Cys-909, and His-910 each coordinate Zn(2+).

It belongs to the SecA family. Monomer and homodimer. Part of the essential Sec protein translocation apparatus which comprises SecA, SecYEG and auxiliary proteins SecDF-YajC and YidC. Requires Zn(2+) as cofactor.

The protein resides in the cell inner membrane. It is found in the cytoplasm. It carries out the reaction ATP + H2O + cellular proteinSide 1 = ADP + phosphate + cellular proteinSide 2.. Its function is as follows. Part of the Sec protein translocase complex. Interacts with the SecYEG preprotein conducting channel. Has a central role in coupling the hydrolysis of ATP to the transfer of proteins into and across the cell membrane, serving both as a receptor for the preprotein-SecB complex and as an ATP-driven molecular motor driving the stepwise translocation of polypeptide chains across the membrane. This chain is Protein translocase subunit SecA, found in Xylella fastidiosa (strain M23).